Consider the following 483-residue polypeptide: Cysteine--tRNA ligase (483 aa).

Cys-29 serves as a coordination point for Zn(2+). Positions Pro-31–His-41 match the 'HIGH' region motif. Zn(2+)-binding residues include Cys-221, His-246, and Glu-250. The 'KMSKS' region signature appears at Lys-278–Ser-282. Lys-281 contributes to the ATP binding site.

The protein belongs to the class-I aminoacyl-tRNA synthetase family. As to quaternary structure, monomer. Zn(2+) is required as a cofactor.

It localises to the cytoplasm. The catalysed reaction is tRNA(Cys) + L-cysteine + ATP = L-cysteinyl-tRNA(Cys) + AMP + diphosphate. The chain is Cysteine--tRNA ligase from Chlorobium luteolum (strain DSM 273 / BCRC 81028 / 2530) (Pelodictyon luteolum).